A 268-amino-acid polypeptide reads, in one-letter code: Nickel import ATP-binding protein NikE (268 aa).

The ABC transporter domain occupies 4–252; sequence LNVSDLSHHY…SSDAGRVLQN (249 aa). 45-52 serves as a coordination point for ATP; it reads GRSGCGKS.

This sequence belongs to the ABC transporter superfamily. Nickel importer (TC 3.A.1.5.3) family. In terms of assembly, the complex is composed of two ATP-binding proteins (NikD and NikE), two transmembrane proteins (NikB and NikC) and a solute-binding protein (NikA).

The protein localises to the cell inner membrane. It catalyses the reaction Ni(2+)(out) + ATP + H2O = Ni(2+)(in) + ADP + phosphate + H(+). Its function is as follows. Part of the ABC transporter complex NikABCDE involved in nickel import. Responsible for energy coupling to the transport system. This chain is Nickel import ATP-binding protein NikE, found in Escherichia coli O157:H7.